Reading from the N-terminus, the 192-residue chain is UPF0312 protein plu2095 (192 aa).

Residues 1 to 23 (MLKKTLLGLTAGALLLNASSALA) form the signal peptide.

The protein belongs to the UPF0312 family. Type 1 subfamily.

Its subcellular location is the periplasm. The chain is UPF0312 protein plu2095 from Photorhabdus laumondii subsp. laumondii (strain DSM 15139 / CIP 105565 / TT01) (Photorhabdus luminescens subsp. laumondii).